The sequence spans 273 residues: Fos-related antigen 1 (273 aa).

2 disordered regions span residues 1–46 (MYRD…IDSS) and 60–114 (GPTG…RRER). Low complexity predominate over residues 7-35 (EPGPSSGAGSPYGRPAQPPQAQAQTAQQQ). The region spanning 105–168 (EERRRVRRER…ERLELVLEAH (64 aa)) is the bZIP domain. A basic motif region spans residues 107 to 127 (RRRVRRERNKLAAAKCRNRRK). Residues 133 to 161 (LQAETDKLEDEKSGLQREIEELQKQKERL) form a leucine-zipper region. The segment covering 169–182 (RPICKIPEGDKKDP) has biased composition (basic and acidic residues). Residues 169 to 273 (RPICKIPEGD…PLGSPTLLAL (105 aa)) are disordered. Low complexity-rich tracts occupy residues 217–235 (LHTP…TPSL) and 254–273 (SSSS…LLAL). Residue serine 267 is modified to Phosphoserine.

The protein belongs to the bZIP family. Fos subfamily. Heterodimer. Interacts with the BAF multiprotein chromatin-remodeling complex subunits SMARCB1 and SMARCD1. Interacts with ARID1A and JUN.

It localises to the nucleus. This Mus musculus (Mouse) protein is Fos-related antigen 1 (Fosl1).